We begin with the raw amino-acid sequence, 185 residues long: Ribosome-recycling factor (185 aa).

Belongs to the RRF family.

It localises to the cytoplasm. Functionally, responsible for the release of ribosomes from messenger RNA at the termination of protein biosynthesis. May increase the efficiency of translation by recycling ribosomes from one round of translation to another. This chain is Ribosome-recycling factor, found in Listeria innocua serovar 6a (strain ATCC BAA-680 / CLIP 11262).